Reading from the N-terminus, the 386-residue chain is Cytochrome b (386 aa).

Transmembrane regions (helical) follow at residues 39-59, 83-104, 119-139, and 184-204; these read FGSLLGLCLVIQLITGIFLAM, FMLKYIHANGASLFFLCVYIHM, WNIGVIIYLVMMLTAFLGYVL, and FFSLHYLFPFLIAGLGVLHIL. 2 residues coordinate heme b: His-89 and His-103. The heme b site is built by His-188 and His-202. Position 207 (His-207) interacts with a ubiquinone. 4 helical membrane-spanning segments follow: residues 232-252, 294-314, 326-346, and 353-374; these read YKDLFGIMVLSSILVILCYFM, LGGVLAMVFSILVLLLLPFIH, LGKIAFWFLVADFILLTWLGA, and YIMIGQFASLFYFCYFLVLVPL.

The protein belongs to the cytochrome b family. In terms of assembly, the main subunits of complex b-c1 are: cytochrome b, cytochrome c1 and the Rieske protein. Heme b is required as a cofactor.

The protein localises to the mitochondrion inner membrane. Functionally, component of the ubiquinol-cytochrome c reductase complex (complex III or cytochrome b-c1 complex) that is part of the mitochondrial respiratory chain. The b-c1 complex mediates electron transfer from ubiquinol to cytochrome c. Contributes to the generation of a proton gradient across the mitochondrial membrane that is then used for ATP synthesis. The chain is Cytochrome b (MT-CYB) from Sarcophyton glaucum (Toadstool umbrella leather coral).